We begin with the raw amino-acid sequence, 129 residues long: Urease subunit beta (129 aa).

This sequence belongs to the urease beta subunit family. In terms of assembly, heterotrimer of UreA (gamma), UreB (beta) and UreC (alpha) subunits. Three heterotrimers associate to form the active enzyme.

The protein localises to the cytoplasm. It catalyses the reaction urea + 2 H2O + H(+) = hydrogencarbonate + 2 NH4(+). Its pathway is nitrogen metabolism; urea degradation; CO(2) and NH(3) from urea (urease route): step 1/1. In Photorhabdus laumondii subsp. laumondii (strain DSM 15139 / CIP 105565 / TT01) (Photorhabdus luminescens subsp. laumondii), this protein is Urease subunit beta.